The primary structure comprises 305 residues: Mitochondrial distribution and morphology protein 12 (305 aa).

The SMP-LTD domain maps to 1–236 (MSVEIDWDNI…WPSWIDLDFT (236 aa)). Positions 233–305 (LDFTPEDPED…RVNSNTSLEE (73 aa)) are disordered. Residues 235 to 248 (FTPEDPEDPEEEGR) show a composition bias toward acidic residues. Basic and acidic residues predominate over residues 258 to 269 (NDGKDIEMKSGT). Polar residues predominate over residues 279 to 305 (ESVQHVSPAVTSIDQESRVNSNTSLEE).

It belongs to the MDM12 family. As to quaternary structure, component of the ER-mitochondria encounter structure (ERMES) or MDM complex, composed of MMM1, MDM10, MDM12 and MDM34. An MMM1 homodimer associates with one molecule of MDM12 on each side in a pairwise head-to-tail manner, and the SMP-LTD domains of MMM1 and MDM12 generate a continuous hydrophobic tunnel for phospholipid trafficking.

It is found in the mitochondrion outer membrane. The protein resides in the endoplasmic reticulum membrane. Its function is as follows. Component of the ERMES/MDM complex, which serves as a molecular tether to connect the endoplasmic reticulum (ER) and mitochondria. Components of this complex are involved in the control of mitochondrial shape and protein biogenesis, and function in nonvesicular lipid trafficking between the ER and mitochondria. MDM12 is required for the interaction of the ER-resident membrane protein MMM1 and the outer mitochondrial membrane-resident beta-barrel protein MDM10. The MDM12-MMM1 subcomplex functions in the major beta-barrel assembly pathway that is responsible for biogenesis of all mitochondrial outer membrane beta-barrel proteins, and acts in a late step after the SAM complex. The MDM10-MDM12-MMM1 subcomplex further acts in the TOM40-specific pathway after the action of the MDM12-MMM1 complex. Essential for establishing and maintaining the structure of mitochondria and maintenance of mtDNA nucleoids. This is Mitochondrial distribution and morphology protein 12 from Kluyveromyces lactis (strain ATCC 8585 / CBS 2359 / DSM 70799 / NBRC 1267 / NRRL Y-1140 / WM37) (Yeast).